A 178-amino-acid chain; its full sequence is uncharacterized protein (178 aa).

An N-terminal signal peptide occupies residues 1–23; sequence MTMFKKISVLFFTLILAGCSSWS.

This is an uncharacterized protein from Haemophilus influenzae (strain ATCC 51907 / DSM 11121 / KW20 / Rd).